The primary structure comprises 300 residues: Tyrosine recombinase XerC (300 aa).

Residues 1 to 86 (MESVLDAFDQ…AVKTFTAWAV (86 aa)) enclose the Core-binding (CB) domain. The 188-residue stretch at 107 to 294 (TLPAVLRQDQ…TVARLRAVHD (188 aa)) folds into the Tyr recombinase domain. Active-site residues include Arg-151, Lys-175, His-246, Arg-249, and His-272. Tyr-281 acts as the O-(3'-phospho-DNA)-tyrosine intermediate in catalysis.

The protein belongs to the 'phage' integrase family. XerC subfamily. As to quaternary structure, forms a cyclic heterotetrameric complex composed of two molecules of XerC and two molecules of XerD.

It is found in the cytoplasm. Site-specific tyrosine recombinase, which acts by catalyzing the cutting and rejoining of the recombining DNA molecules. The XerC-XerD complex is essential to convert dimers of the bacterial chromosome into monomers to permit their segregation at cell division. It also contributes to the segregational stability of plasmids. This is Tyrosine recombinase XerC from Mycobacterium sp. (strain JLS).